The chain runs to 376 residues: Tetraacyldisaccharide 4'-kinase (376 aa).

51–58 (AVGGTGKT) serves as a coordination point for ATP.

The protein belongs to the LpxK family.

The catalysed reaction is a lipid A disaccharide + ATP = a lipid IVA + ADP + H(+). Its pathway is glycolipid biosynthesis; lipid IV(A) biosynthesis; lipid IV(A) from (3R)-3-hydroxytetradecanoyl-[acyl-carrier-protein] and UDP-N-acetyl-alpha-D-glucosamine: step 6/6. In terms of biological role, transfers the gamma-phosphate of ATP to the 4'-position of a tetraacyldisaccharide 1-phosphate intermediate (termed DS-1-P) to form tetraacyldisaccharide 1,4'-bis-phosphate (lipid IVA). This is Tetraacyldisaccharide 4'-kinase from Bacteroides fragilis (strain YCH46).